Reading from the N-terminus, the 513-residue chain is Bifunctional purine biosynthesis protein PurH (513 aa).

Residues 1-147 form the MGS-like domain; that stretch reads MIQIKRALVS…KNHKNVVVLT (147 aa).

This sequence belongs to the PurH family.

The catalysed reaction is (6R)-10-formyltetrahydrofolate + 5-amino-1-(5-phospho-beta-D-ribosyl)imidazole-4-carboxamide = 5-formamido-1-(5-phospho-D-ribosyl)imidazole-4-carboxamide + (6S)-5,6,7,8-tetrahydrofolate. The enzyme catalyses IMP + H2O = 5-formamido-1-(5-phospho-D-ribosyl)imidazole-4-carboxamide. It participates in purine metabolism; IMP biosynthesis via de novo pathway; 5-formamido-1-(5-phospho-D-ribosyl)imidazole-4-carboxamide from 5-amino-1-(5-phospho-D-ribosyl)imidazole-4-carboxamide (10-formyl THF route): step 1/1. It functions in the pathway purine metabolism; IMP biosynthesis via de novo pathway; IMP from 5-formamido-1-(5-phospho-D-ribosyl)imidazole-4-carboxamide: step 1/1. This Leptospira biflexa serovar Patoc (strain Patoc 1 / Ames) protein is Bifunctional purine biosynthesis protein PurH.